The sequence spans 225 residues: 3-dehydroquinate dehydratase (225 aa).

Residues serine 6, 30-32 (EWR), and arginine 62 contribute to the 3-dehydroquinate site. The active-site Proton donor/acceptor is histidine 118. Lysine 143 acts as the Schiff-base intermediate with substrate in catalysis. Arginine 186, serine 205, and glutamine 209 together coordinate 3-dehydroquinate.

It belongs to the type-I 3-dehydroquinase family. As to quaternary structure, homodimer.

It catalyses the reaction 3-dehydroquinate = 3-dehydroshikimate + H2O. It functions in the pathway metabolic intermediate biosynthesis; chorismate biosynthesis; chorismate from D-erythrose 4-phosphate and phosphoenolpyruvate: step 3/7. Its function is as follows. Involved in the third step of the chorismate pathway, which leads to the biosynthesis of aromatic amino acids. Catalyzes the cis-dehydration of 3-dehydroquinate (DHQ) and introduces the first double bond of the aromatic ring to yield 3-dehydroshikimate. The chain is 3-dehydroquinate dehydratase from Streptococcus pneumoniae (strain Taiwan19F-14).